The following is a 293-amino-acid chain: Transcription elongation factor S-II (293 aa).

Residues 4-81 (ADIRSAKAAL…KKWKADVSKG (78 aa)) form the TFIIS N-terminal domain. The disordered stretch occupies residues 81-123 (GRPLKTTTTTSSTPSKHADVGSQAQKQVQKQSSSGQRTFKSDN). The span at 100-116 (VGSQAQKQVQKQSSSGQ) shows a compositional bias: low complexity. The 116-residue stretch at 133 to 248 (IRNNCIGLMY…HAQGAKPQKA (116 aa)) folds into the TFIIS central domain. Residues 251-291 (DLFTCGKCKQKKVSYYQMQTRSADEPMTTFCECTVCGNRWK) form a TFIIS-type zinc finger. Residues C255, C258, C283, and C286 each contribute to the Zn(2+) site.

The protein belongs to the TFS-II family.

It is found in the nucleus. Functionally, necessary for efficient RNA polymerase II transcription elongation past template-encoded arresting sites. The arresting sites in DNA have the property of trapping a certain fraction of elongating RNA polymerases that pass through, resulting in locked ternary complexes. Cleavage of the nascent transcript by S-II allows the resumption of elongation from the new 3'-terminus. This Schizosaccharomyces pombe (strain 972 / ATCC 24843) (Fission yeast) protein is Transcription elongation factor S-II (tfs1).